We begin with the raw amino-acid sequence, 528 residues long: Sulfhydryl oxidase 1 (528 aa).

Residues 1–19 (MSLIHLFLLLGLLSLEAAA) form the signal peptide. The 136-residue stretch at 35–170 (NVADQKDNAI…LLNWINKQIG (136 aa)) folds into the Thioredoxin domain. Asparagine 47 is a glycosylation site (N-linked (GlcNAc...) asparagine). Catalysis depends on nucleophile residues cysteine 72 and cysteine 75. Cysteine 72 and cysteine 75 are disulfide-bonded. N-linked (GlcNAc...) asparagine glycans are attached at residues asparagine 186 and asparagine 297. Cysteine 292 and cysteine 304 are disulfide-bonded. Residues 295-397 (SKNETRGFSC…GDPKFPKMIW (103 aa)) form the ERV/ALR sulfhydryl oxidase domain. FAD contacts are provided by residues arginine 300, tryptophan 307, histidine 311, aspartate 341, histidine 345, 368–375 (WSTHNKVN), lysine 394, and tryptophan 397. The cysteines at positions 339 and 342 are disulfide-linked. Cysteine 403 and cysteine 406 are disulfide-bonded.

It depends on FAD as a cofactor. Highly expressed in roots.

It localises to the secreted. The protein localises to the cell wall. It catalyses the reaction 2 R'C(R)SH + O2 = R'C(R)S-S(R)CR' + H2O2. Its function is as follows. Sulfhydryl oxidase involved in the regulation of cation homeostasis. Positively regulates shoot accumulation of K(+) and inhibits accumulation of toxic cations. Acts at the level of root K(+) efflux systems involved in xylem loading (root symplast-xylem interface). This Arabidopsis thaliana (Mouse-ear cress) protein is Sulfhydryl oxidase 1 (QSOX1).